Consider the following 464-residue polypeptide: MKNTVLIKKIYRETDQFLSKEVMISGWIRTLRASNAFGFIEINDGSFFKNIQVVFDDKLGNFKEISKLPISSSISVVGTLVATPDAKQPFEIQAKEIVIEGMSNSDYPLQKKRHTFEYLRSIAHLRPRSNAFSATFRVRSVAAFAIHKFFQEQGFVYTHTPIITGSDCEGAGEMFRVTTLDPKAPELTKEGDIDYTKDFFGKETNLTVSGQLNAECFALAFRNIYTFGPTFRAENSNTTRHAAEFWMIEPEIAFADLQDDMELAEAMLKYVIKYVMDECPEELQFFNSFVDKGLLERLNHVVSSDFAKVTYTEAVEILEKCDKEFDYDVSWGIDLQTEHERYLTEEHFKKPLFVTDYPKEIKAFYMRMNEDNKTVAATDLLVPGIGEIIGGSQREERLDVLEARMAELGLKKEDYWWYLELRKYGETKHAGFGLGFERLIMYITGMTNIRDVIPFPRTPGTSEF.

Belongs to the class-II aminoacyl-tRNA synthetase family. As to quaternary structure, homodimer.

The protein resides in the cytoplasm. The enzyme catalyses tRNA(Asn) + L-asparagine + ATP = L-asparaginyl-tRNA(Asn) + AMP + diphosphate + H(+). This is Asparagine--tRNA ligase from Clostridium botulinum (strain Eklund 17B / Type B).